The chain runs to 100 residues: MIPLQHGLILAAILFVLGLTGLLVRRNLLFMLISLEVMINAAALAFIVAGSYWGQPDGQVMYILAISLAAAEASIGLALLLQLYRRRHTLNIDTVSEMRG.

Transmembrane regions (helical) follow at residues 4 to 24 (LQHG…GLLV), 28 to 48 (LLFM…AFIV), and 60 to 80 (VMYI…LALL).

This sequence belongs to the complex I subunit 4L family. As to quaternary structure, NDH-1 is composed of 13 different subunits. Subunits NuoA, H, J, K, L, M, N constitute the membrane sector of the complex.

Its subcellular location is the cell inner membrane. The catalysed reaction is a quinone + NADH + 5 H(+)(in) = a quinol + NAD(+) + 4 H(+)(out). NDH-1 shuttles electrons from NADH, via FMN and iron-sulfur (Fe-S) centers, to quinones in the respiratory chain. The immediate electron acceptor for the enzyme in this species is believed to be ubiquinone. Couples the redox reaction to proton translocation (for every two electrons transferred, four hydrogen ions are translocated across the cytoplasmic membrane), and thus conserves the redox energy in a proton gradient. In Serratia proteamaculans (strain 568), this protein is NADH-quinone oxidoreductase subunit K.